A 533-amino-acid polypeptide reads, in one-letter code: Probable protein kinase UbiB (533 aa).

The chain crosses the membrane as a helical span at residues 24 to 44 (LILELPMLPWWLRLLGATLPW). Residues 126–494 (RFEREPLASA…WKGSRHDWLG (369 aa)) form the Protein kinase domain. Residues 132–140 (LASASVAQV) and K154 each bind ATP. Catalysis depends on D289, which acts as the Proton acceptor. Residues 510-530 (LGQQLEAWPAWVMLAGGVFLI) form a helical membrane-spanning segment.

It belongs to the ABC1 family. UbiB subfamily.

The protein localises to the cell inner membrane. It participates in cofactor biosynthesis; ubiquinone biosynthesis [regulation]. Its function is as follows. Is probably a protein kinase regulator of UbiI activity which is involved in aerobic coenzyme Q (ubiquinone) biosynthesis. The sequence is that of Probable protein kinase UbiB from Pseudomonas aeruginosa (strain UCBPP-PA14).